Consider the following 505-residue polypeptide: Protein MGF 505-4R (505 aa).

Belongs to the asfivirus MGF 505 family.

In terms of biological role, plays a role in virus cell tropism, and may be required for efficient virus replication in macrophages. The polypeptide is Protein MGF 505-4R (Ornithodoros (relapsing fever ticks)).